Consider the following 236-residue polypeptide: MNTTPDTPTPRALRELTPLEARILGVLVEKQHTVPDTYPLSLNALTAGCNQKTARAPVMNVSEDEVTTALDGLKHLSLVMEGSSSRVPRFEHNMNRVLGIPSQAIALLTILLLRGPQTAAELRLNSARLHGFADISSVEAFLDELAARAQPLVVRLPRAPGARENRWMHLMCGEVNMADFASADAGGGADSVPPSEFEALKAEQKRLADEVTRLNALVQRMASELGIDVDTPGNAS.

Belongs to the UPF0502 family.

The polypeptide is UPF0502 protein BceJ2315_62050 (Burkholderia cenocepacia (strain ATCC BAA-245 / DSM 16553 / LMG 16656 / NCTC 13227 / J2315 / CF5610) (Burkholderia cepacia (strain J2315))).